Reading from the N-terminus, the 132-residue chain is Small ribosomal subunit protein uS8 (132 aa).

Belongs to the universal ribosomal protein uS8 family. As to quaternary structure, part of the 30S ribosomal subunit. Contacts proteins S5 and S12.

One of the primary rRNA binding proteins, it binds directly to 16S rRNA central domain where it helps coordinate assembly of the platform of the 30S subunit. The chain is Small ribosomal subunit protein uS8 from Arthrobacter sp. (strain FB24).